The primary structure comprises 396 residues: Purine ribonucleoside efflux pump NepI (396 aa).

Topologically, residues 1-21 (MSEFIAENRGANAITRPNWSA) are cytoplasmic. A helical transmembrane segment spans residues 22–42 (VFSVAFCVACLIIVEFLPVSL). Topologically, residues 43–54 (LTPMAQDLGISE) are periplasmic. A helical membrane pass occupies residues 55–75 (GVAGQSVTVTAFVAMFASLFI). Over 76–85 (TQTIQATDRR) the chain is Cytoplasmic. A helical membrane pass occupies residues 86–106 (YVVILFAVLLTLSCLLVSFAN). Position 107 (Ser107) is a topological domain, periplasmic. The helical transmembrane segment at 108–128 (FSLLLIGRACLGLALGGFWAM) threads the bilayer. Topologically, residues 129–147 (SASLTMRLVPPRTVPKALS) are cytoplasmic. The chain crosses the membrane as a helical span at residues 148-168 (VIFGAVSIALVIAAPLGSFLG). Residues 169 to 175 (ELIGWRN) lie on the Periplasmic side of the membrane. Residues 176-196 (VFNAAAAMGVLCIFWIIKSLP) traverse the membrane as a helical segment. At 197–215 (SLPGEPSHQKQNTFRLLQR) the chain is on the cytoplasmic side. The chain crosses the membrane as a helical span at residues 216 to 236 (PGVMAGMIAIFMSFAGQFAFF). Residues 237–255 (TYIRPVYMNLAGFGVDGLT) are Periplasmic-facing. The chain crosses the membrane as a helical span at residues 256–276 (LVLLSFGIASFVGTSLSSFIL). The Cytoplasmic portion of the chain corresponds to 277–281 (KRSVK). A helical transmembrane segment spans residues 282–302 (LALAGAPFVLALSALVLTLWG). Topologically, residues 303–305 (SYK) are periplasmic. The chain crosses the membrane as a helical span at residues 306–326 (IVATGVAIIWGLTFALIPVGW). The Cytoplasmic segment spans residues 327–343 (STWITRSLADQAEKAGS). The chain crosses the membrane as a helical span at residues 344 to 364 (IQVAVIQLANTCGAAIGGYAL). Residues 365–366 (DN) lie on the Periplasmic side of the membrane. A helical membrane pass occupies residues 367–387 (IGLTSPLMLSGTLMLLTALLV). The Cytoplasmic segment spans residues 388-396 (TAKVKMKKS).

The protein belongs to the major facilitator superfamily. DHA1 family. NepI (TC 2.A.1.2.26) subfamily.

It localises to the cell inner membrane. It carries out the reaction inosine(in) + H(+)(out) = inosine(out) + H(+)(in). The catalysed reaction is guanosine(in) + H(+)(out) = guanosine(out) + H(+)(in). Functionally, involved in the efflux of purine ribonucleosides, such as inosine and guanosine. This chain is Purine ribonucleoside efflux pump NepI, found in Escherichia coli O6:H1 (strain CFT073 / ATCC 700928 / UPEC).